The primary structure comprises 519 residues: Transmembrane protein 180 (519 aa).

Residues 1–11 (MGLDWPQAWLL) are Extracellular-facing. Residues 12–43 (GLPIAVVYGSLALFTSILHNVFLLYYVDTFVS) form a helical membrane-spanning segment. Topologically, residues 44-55 (VYKINKVSFWVG) are cytoplasmic. The chain crosses the membrane as a helical span at residues 56-74 (ETVFLLWNSFNDPLFGWLS). Residues 75-100 (DRQLLSSQPRSGAGLSSRDVVLTRVR) lie on the Extracellular side of the membrane. Residues 101–118 (ALGWHGPLLALSFLAFWV) form a helical membrane-spanning segment. The Cytoplasmic portion of the chain corresponds to 119 to 126 (PWAPAGLQ). Residues 127 to 151 (FLLCLCLYDGFLTLVDLHHHALLAD) traverse the membrane as a helical segment. Residues 152 to 155 (LALS) are Extracellular-facing. A helical transmembrane segment spans residues 156–179 (SHDRTHLNFYCSLFSAAGSLSVFA). Over 180-191 (SYAFWNKEDFSS) the chain is Cytoplasmic. Residues 192-223 (FRAFCVVLAAGSGLGFLGTTQLLKRQIEATRR) traverse the membrane as a helical segment. The Extracellular segment spans residues 224 to 264 (DRGCPGLDLDGGVCEEEPPVGGEEAGNITLGQYLRQLARHQ). Asn-250 is a glycosylation site (N-linked (GlcNAc...) asparagine). Residues 265–292 (NFLWFVGMDLVQVFHCHFNSNFFPLFLE) form a helical membrane-spanning segment. Residues 293-305 (HLLSDHISLSTGS) lie on the Cytoplasmic side of the membrane. Residues 306-325 (FLLGISYVAPHLNNLYFLPL) form a helical membrane-spanning segment. At 326–330 (CRRWG) the chain is on the extracellular side. The helical transmembrane segment at 331–350 (VYAVVRGLFLLKLSLSLLML) threads the bilayer. The Cytoplasmic segment spans residues 351 to 358 (LAGPDHPG). The helical transmembrane segment at 359-393 (LLCFFIASNRVFTEGTCKLLTLVVTDLVDEDLVLN) threads the bilayer. The Extracellular portion of the chain corresponds to 394-402 (HRKQAASAL). A helical membrane pass occupies residues 403–429 (LFGMVALVTKPGQTFAPLLGTWLLCFY). Over 430 to 468 (TGHDLFQQSPMTPVGSVRPWPELPAPAPAPAQAPTLRQG) the chain is Cytoplasmic. Residues 469–487 (CFYLLVFVPITCALLQLFT) traverse the membrane as a helical segment. At 488–519 (WSQFTLHGRRLRTVKAQRQNLAQIHTLNIKMV) the chain is on the extracellular side.

The protein localises to the cell membrane. The protein is Transmembrane protein 180 of Mus musculus (Mouse).